The chain runs to 510 residues: MKKELVFIIDFGGQYSQLIARRVRENNVYCEIIPYSTSIEKIKEKNPKGIIFSGGPNSVYGENSPRISKEIFEIDVPVLGICYGQQLASFILGGKVESAKVREYGKTAVNLDNKCALFEGIDKVQECWMSHTDYVSEIPSGFNIVAYTDGCKVAAMANEDKKIYGVQFHPEVEHTPFGKKMLKNFLFNICELKGDWSVTSFAEEKIKEIRELVGDKKVICALSGGVDSSVAAVIVHKAIGDQLTCIFVDHGLLRKDEGDQVESIFKEKFQMNLIRVNAQDRFLGKLKGVTEPERKRKIIGEEFIRVFEEEANKLGKIDYLVQGTIYPDVVESGTDTSATIKSHHNVGGLPEDIEFELIEPLRELFKDEVRRVGEELGIPHKLVWRQPFPGPGLGIRVLGEVTEEKLEIVREADAIFREEIANAGLDEKIWQYFACLPNIRSVGVMGDERTYSHTIGLRAVNSSDGMTSDWAKIPYEVLDKVSIRIVNEVKGVNRIVYDITSKPPSTIEWE.

In terms of domain architecture, Glutamine amidotransferase type-1 spans 5–195 (LVFIIDFGGQ…LFNICELKGD (191 aa)). Cys82 acts as the Nucleophile in catalysis. Residues His169 and Glu171 contribute to the active site. Residues 196–385 (WSVTSFAEEK…LGIPHKLVWR (190 aa)) form the GMPS ATP-PPase domain. 223 to 229 (SGGVDSS) provides a ligand contact to ATP.

As to quaternary structure, homodimer.

It catalyses the reaction XMP + L-glutamine + ATP + H2O = GMP + L-glutamate + AMP + diphosphate + 2 H(+). Its pathway is purine metabolism; GMP biosynthesis; GMP from XMP (L-Gln route): step 1/1. Catalyzes the synthesis of GMP from XMP. This Clostridium tetani (strain Massachusetts / E88) protein is GMP synthase [glutamine-hydrolyzing].